We begin with the raw amino-acid sequence, 348 residues long: Erlin-1 (348 aa).

Topologically, residues 1–7 are cytoplasmic; sequence MNMTQAR. The chain crosses the membrane as a helical span at residues 8-28; it reads VLVAAVVGLVAVLLYASIHKI. At 29 to 348 the chain is on the lumenal side; that stretch reads EEGHLAVYYR…NLIQNKESTG (320 aa). Asparagine 108 is a glycosylation site (N-linked (GlcNAc...) asparagine). At lysine 269 the chain carries N6-acetyllysine. Over residues 321 to 333 the composition is skewed to basic and acidic residues; sequence TGRESSHPSKEAL. Residues 321–348 are disordered; sequence TGRESSHPSKEALEPSGENLIQNKESTG. Polar residues predominate over residues 339 to 348; that stretch reads NLIQNKESTG.

Belongs to the band 7/mec-2 family. As to quaternary structure, forms a heteromeric complex with ERLIN2. In complex with ERLIN2, interacts with RNF170. Interacts with AMFR and SYVN1. Post-translationally, deubiquitinated by USP25; leading to stabilization.

It is found in the endoplasmic reticulum membrane. In terms of biological role, component of the ERLIN1/ERLIN2 complex which mediates the endoplasmic reticulum-associated degradation (ERAD) of inositol 1,4,5-trisphosphate receptors (IP3Rs). Involved in regulation of cellular cholesterol homeostasis by regulation the SREBP signaling pathway. Binds cholesterol and may promote ER retention of the SCAP-SREBF complex. This Pongo abelii (Sumatran orangutan) protein is Erlin-1.